Here is a 314-residue protein sequence, read N- to C-terminus: Oxidoreductase NAD-binding domain-containing protein 1 (314 aa).

The first 18 residues, Met1–Gly18, serve as a signal peptide directing secretion. Residues Glu63 to Gln166 enclose the FAD-binding FR-type domain. NAD(+) is bound at residue Gly180–Pro185.

The sequence is that of Oxidoreductase NAD-binding domain-containing protein 1 (oxnad1) from Xenopus laevis (African clawed frog).